Here is a 179-residue protein sequence, read N- to C-terminus: Large ribosomal subunit protein uL6 (179 aa).

Belongs to the universal ribosomal protein uL6 family. Part of the 50S ribosomal subunit.

Functionally, this protein binds to the 23S rRNA, and is important in its secondary structure. It is located near the subunit interface in the base of the L7/L12 stalk, and near the tRNA binding site of the peptidyltransferase center. The sequence is that of Large ribosomal subunit protein uL6 from Herpetosiphon aurantiacus (strain ATCC 23779 / DSM 785 / 114-95).